We begin with the raw amino-acid sequence, 295 residues long: Xyloglucan endotransglucosylase/hydrolase (295 aa).

The first 23 residues, 1–23, serve as a signal peptide directing secretion; it reads MAVSSTPWALVALFLMASSTVMA. In terms of domain architecture, GH16 spans 25–222; the sequence is PPRKAIDVPF…WANAPFIASY (198 aa). Glu-108 functions as the Nucleophile in the catalytic mechanism. Glu-112 functions as the Proton donor in the catalytic mechanism. Glu-112 is a binding site for xyloglucan. N-linked (GlcNAc...) asparagine glycosylation occurs at Asn-116. Residues 125–127, 135–137, 201–202, and Gly-206 contribute to the xyloglucan site; these read QTN, NRE, and DW. 2 disulfide bridges follow: Cys-230-Cys-239 and Cys-276-Cys-289. Residue Arg-281 participates in xyloglucan binding.

The protein belongs to the glycosyl hydrolase 16 family. XTH group 1 subfamily. In terms of processing, contains at least one intrachain disulfide bond essential for its enzymatic activity. The N-glycan consists of an (GlcNAc)2(Hex)6 oligosaccharide; not essential for its enzymatic activity.

The protein localises to the secreted. Its subcellular location is the cell wall. It is found in the extracellular space. The protein resides in the apoplast. It catalyses the reaction breaks a beta-(1-&gt;4) bond in the backbone of a xyloglucan and transfers the xyloglucanyl segment on to O-4 of the non-reducing terminal glucose residue of an acceptor, which can be a xyloglucan or an oligosaccharide of xyloglucan.. In terms of biological role, catalyzes xyloglucan endohydrolysis (XEH) and/or endotransglycosylation (XET). Cleaves and religates xyloglucan polymers, an essential constituent of the primary cell wall, and thereby participates in cell wall construction of growing tissues. The protein is Xyloglucan endotransglucosylase/hydrolase (XET16A) of Brassica oleracea var. botrytis (Cauliflower).